Here is a 260-residue protein sequence, read N- to C-terminus: Flap endonuclease Xni (260 aa).

D112 serves as a coordination point for Mg(2+). Residues L168–P258 enclose the 5'-3' exonuclease domain. The K(+) site is built by L179, V190, and I193. Residues G192–T197 are interaction with DNA.

This sequence belongs to the Xni family. Mg(2+) serves as cofactor. Requires K(+) as cofactor.

Has flap endonuclease activity. During DNA replication, flap endonucleases cleave the 5'-overhanging flap structure that is generated by displacement synthesis when DNA polymerase encounters the 5'-end of a downstream Okazaki fragment. The polypeptide is Flap endonuclease Xni (Tolumonas auensis (strain DSM 9187 / NBRC 110442 / TA 4)).